A 471-amino-acid polypeptide reads, in one-letter code: ATP synthase subunit beta (471 aa).

Residue 153–160 coordinates ATP; it reads GGAGVGKT.

This sequence belongs to the ATPase alpha/beta chains family. In terms of assembly, F-type ATPases have 2 components, CF(1) - the catalytic core - and CF(0) - the membrane proton channel. CF(1) has five subunits: alpha(3), beta(3), gamma(1), delta(1), epsilon(1). CF(0) has four main subunits: a(1), b(1), b'(1) and c(9-12).

It localises to the cell membrane. It catalyses the reaction ATP + H2O + 4 H(+)(in) = ADP + phosphate + 5 H(+)(out). Functionally, produces ATP from ADP in the presence of a proton gradient across the membrane. The catalytic sites are hosted primarily by the beta subunits. The sequence is that of ATP synthase subunit beta from Roseiflexus castenholzii (strain DSM 13941 / HLO8).